Reading from the N-terminus, the 612-residue chain is Dihydroxy-acid dehydratase (612 aa).

Residue Asp81 participates in Mg(2+) binding. A [2Fe-2S] cluster-binding site is contributed by Cys122. 2 residues coordinate Mg(2+): Asp123 and Lys124. Lys124 bears the N6-carboxylysine mark. Cys195 lines the [2Fe-2S] cluster pocket. A Mg(2+)-binding site is contributed by Glu491. Ser517 (proton acceptor) is an active-site residue.

The protein belongs to the IlvD/Edd family. As to quaternary structure, homodimer. Requires [2Fe-2S] cluster as cofactor. It depends on Mg(2+) as a cofactor.

It catalyses the reaction (2R)-2,3-dihydroxy-3-methylbutanoate = 3-methyl-2-oxobutanoate + H2O. It carries out the reaction (2R,3R)-2,3-dihydroxy-3-methylpentanoate = (S)-3-methyl-2-oxopentanoate + H2O. The protein operates within amino-acid biosynthesis; L-isoleucine biosynthesis; L-isoleucine from 2-oxobutanoate: step 3/4. It functions in the pathway amino-acid biosynthesis; L-valine biosynthesis; L-valine from pyruvate: step 3/4. In terms of biological role, functions in the biosynthesis of branched-chain amino acids. Catalyzes the dehydration of (2R,3R)-2,3-dihydroxy-3-methylpentanoate (2,3-dihydroxy-3-methylvalerate) into 2-oxo-3-methylpentanoate (2-oxo-3-methylvalerate) and of (2R)-2,3-dihydroxy-3-methylbutanoate (2,3-dihydroxyisovalerate) into 2-oxo-3-methylbutanoate (2-oxoisovalerate), the penultimate precursor to L-isoleucine and L-valine, respectively. The protein is Dihydroxy-acid dehydratase of Rhizobium rhizogenes (strain K84 / ATCC BAA-868) (Agrobacterium radiobacter).